The chain runs to 348 residues: tRNA pseudouridine synthase D (348 aa).

Phenylalanine 27 is a substrate binding site. Aspartate 80 serves as the catalytic Nucleophile. Asparagine 129 contacts substrate. In terms of domain architecture, TRUD spans 155 to 303 (GVPNYFGSQR…VEPARRAVLL (149 aa)). Position 329 (phenylalanine 329) interacts with substrate.

The protein belongs to the pseudouridine synthase TruD family.

The enzyme catalyses uridine(13) in tRNA = pseudouridine(13) in tRNA. Functionally, responsible for synthesis of pseudouridine from uracil-13 in transfer RNAs. This Pectobacterium atrosepticum (strain SCRI 1043 / ATCC BAA-672) (Erwinia carotovora subsp. atroseptica) protein is tRNA pseudouridine synthase D.